A 113-amino-acid chain; its full sequence is U11-theraphotoxin-Hhn1r (113 aa).

Positions 1 to 21 are cleaved as a signal peptide; that stretch reads MNTVRVTFLLVFVLAVSLGQA. A propeptide spanning residues 22–74 is cleaved from the precursor; the sequence is DKDENRMEMQEKTEQGKSYLDFAENLLLQKLEELEAKLLEEDSEESRNSRQKR. The interval 61-83 is disordered; sequence EEDSEESRNSRQKRCIGEGVPCD. 3 disulfide bridges follow: Cys-75-Cys-90, Cys-82-Cys-95, and Cys-89-Cys-110.

This sequence belongs to the neurotoxin 14 (magi-1) family. 01 (HNTX-16) subfamily. In terms of tissue distribution, expressed by the venom gland.

It localises to the secreted. Probable ion channel inhibitor. The sequence is that of U11-theraphotoxin-Hhn1r from Cyriopagopus hainanus (Chinese bird spider).